The primary structure comprises 313 residues: MEPANDTTVTEFILTGLSQTREVQLVLFVIFLSFYLFILPVNILIICTIRLDSHLSSPMYFLLANLAFLDIWYSSITAPKMLVDFFVERKIISFGGCIAQLFFLHFVGASEMFLLTVMAFDRYAAICRPLHYATIMNRRLCCILVALSWTGGFVHSIIQVALIVRLPFCGPNELDNYFCDITQVVRIACANTFLEEMVMIFSSGLISVVCFIALLMSYAFLLTMLKKHSSSGESTSRAISTCYSHITIVVLMFGPSIYIYARPFDSFSLDKVVSVFHTVIFPLLNPIIYTLRNKEVKAAMRKLVNRYIFCKEK.

The Extracellular portion of the chain corresponds to 1 to 25 (MEPANDTTVTEFILTGLSQTREVQL). N-linked (GlcNAc...) asparagine glycosylation occurs at asparagine 5. A helical transmembrane segment spans residues 26 to 46 (VLFVIFLSFYLFILPVNILII). The Cytoplasmic segment spans residues 47 to 57 (CTIRLDSHLSS). A helical membrane pass occupies residues 58–78 (PMYFLLANLAFLDIWYSSITA). The Extracellular segment spans residues 79-97 (PKMLVDFFVERKIISFGGC). Cysteine 97 and cysteine 179 form a disulfide bridge. The chain crosses the membrane as a helical span at residues 98 to 118 (IAQLFFLHFVGASEMFLLTVM). The Cytoplasmic portion of the chain corresponds to 119–142 (AFDRYAAICRPLHYATIMNRRLCC). A helical membrane pass occupies residues 143-163 (ILVALSWTGGFVHSIIQVALI). Over 164–204 (VRLPFCGPNELDNYFCDITQVVRIACANTFLEEMVMIFSSG) the chain is Extracellular. A helical membrane pass occupies residues 205–225 (LISVVCFIALLMSYAFLLTML). The Cytoplasmic segment spans residues 226–238 (KKHSSSGESTSRA). The chain crosses the membrane as a helical span at residues 239-259 (ISTCYSHITIVVLMFGPSIYI). Over 260-270 (YARPFDSFSLD) the chain is Extracellular. A helical transmembrane segment spans residues 271–291 (KVVSVFHTVIFPLLNPIIYTL). Residues 292–313 (RNKEVKAAMRKLVNRYIFCKEK) are Cytoplasmic-facing.

This sequence belongs to the G-protein coupled receptor 1 family. Highly expressed in liver but not in adipose tissue. Also expressed at high level in testis.

The protein resides in the cell membrane. Its function is as follows. Olfactory receptor that acts as a receptor of Asprosin hormone at the surface of hepatocytes to promote hepatocyte glucose release. Also binds Asprosin in the arcuate nucleus of the hypothalamus, thereby stimulating appetite by promoting orexigenic AgRP neuronal activity. In testis, Asprosin-binding promotes sperm progressive motility and enhances male fertility. The activity of this receptor is mediated by G proteins which activate adenylyl cyclase, resulting in an elevation of intracellular cAMP. The protein is Olfactory receptor 4M1 of Mus musculus (Mouse).